A 282-amino-acid polypeptide reads, in one-letter code: Bis(5'-nucleosyl)-tetraphosphatase, symmetrical (282 aa).

It belongs to the Ap4A hydrolase family. In terms of assembly, monomer.

The enzyme catalyses P(1),P(4)-bis(5'-adenosyl) tetraphosphate + H2O = 2 ADP + 2 H(+). Its function is as follows. Hydrolyzes diadenosine 5',5'''-P1,P4-tetraphosphate to yield ADP. This Escherichia coli O157:H7 protein is Bis(5'-nucleosyl)-tetraphosphatase, symmetrical.